We begin with the raw amino-acid sequence, 58 residues long: uncharacterized protein (58 aa).

The helical transmembrane segment at 24-44 (LSVYLGLATTIVCIVLFFTML) threads the bilayer.

The protein resides in the membrane. This is an uncharacterized protein from Haemophilus influenzae (strain ATCC 51907 / DSM 11121 / KW20 / Rd).